Reading from the N-terminus, the 140-residue chain is Small ribosomal subunit protein uS12 (140 aa).

Asp-102 carries the 3-methylthioaspartic acid modification.

This sequence belongs to the universal ribosomal protein uS12 family. As to quaternary structure, part of the 30S ribosomal subunit. Contacts proteins S8 and S17. May interact with IF1 in the 30S initiation complex.

In terms of biological role, with S4 and S5 plays an important role in translational accuracy. Interacts with and stabilizes bases of the 16S rRNA that are involved in tRNA selection in the A site and with the mRNA backbone. Located at the interface of the 30S and 50S subunits, it traverses the body of the 30S subunit contacting proteins on the other side and probably holding the rRNA structure together. The combined cluster of proteins S8, S12 and S17 appears to hold together the shoulder and platform of the 30S subunit. The chain is Small ribosomal subunit protein uS12 from Bacillus cereus (strain G9842).